The chain runs to 309 residues: Malate dehydrogenase (309 aa).

NAD(+) contacts are provided by residues 9 to 14 and Asp-33; that span reads GAGFVG. Arg-82 and Arg-88 together coordinate substrate. NAD(+) contacts are provided by residues Asn-95 and 118 to 120; that span reads VNN. The substrate site is built by Asn-120 and Arg-151. Residue His-175 is the Proton acceptor of the active site.

It belongs to the LDH/MDH superfamily. MDH type 3 family.

The enzyme catalyses (S)-malate + NAD(+) = oxaloacetate + NADH + H(+). In terms of biological role, catalyzes the reversible oxidation of malate to oxaloacetate. This Chloroflexus aurantiacus (strain ATCC 29364 / DSM 637 / Y-400-fl) protein is Malate dehydrogenase.